A 731-amino-acid polypeptide reads, in one-letter code: Beta-galactosidase (731 aa).

Positions Met-1–Ser-23 are cleaved as a signal peptide. Catalysis depends on Glu-182, which acts as the Proton donor. Glu-251 acts as the Nucleophile in catalysis. Asn-459 carries N-linked (GlcNAc...) asparagine glycosylation.

Belongs to the glycosyl hydrolase 35 family.

The protein localises to the secreted. The protein resides in the extracellular space. It is found in the apoplast. The enzyme catalyses Hydrolysis of terminal non-reducing beta-D-galactose residues in beta-D-galactosides.. Functionally, involved in cell wall degradation. Degrades polysaccharides containing beta-(1--&gt;4)-linked galactans, acting as an exo-(1--&gt;4)-beta-D-galactanase. This Malus domestica (Apple) protein is Beta-galactosidase.